The primary structure comprises 286 residues: Probable aquaporin-3 (286 aa).

The segment at 1–34 is disordered; the sequence is MADTYGMNGHNGHVKDRRSSSMNGRNRLYAQQEP. Residues 1–52 lie on the Cytoplasmic side of the membrane; the sequence is MADTYGMNGHNGHVKDRRSSSMNGRNRLYAQQEPQRTTHLSEFGKHMVAASG. Residues 53–73 traverse the membrane as a helical segment; it reads EFVGTFLFLYFGYAGNIVAVL. Residues 74 to 87 are Extracellular-facing; sequence QEPISGPNGTLANN. N81 and N86 each carry an N-linked (GlcNAc...) asparagine glycan. The helical transmembrane segment at 88–108 threads the bilayer; sequence TVMYIAMAYGFSLLVNVWTFY. At 109 to 135 the chain is on the cytoplasmic side; the sequence is RISGGLFNPAVTFGLCLSGQLPWIRAL. The NPA 1 motif lies at 116–118; it reads NPA. Residues 136–156 traverse the membrane as a helical segment; sequence FLFPSQIIAAMCAGGLVNAMF. Topologically, residues 157 to 175 are extracellular; it reads PGSASIANTTLGPNTSIAQ. N-linked (GlcNAc...) asparagine glycans are attached at residues N164 and N170. The helical transmembrane segment at 176 to 196 threads the bilayer; sequence GVFLEMFFTAQLVFVVLMLAA. The Cytoplasmic portion of the chain corresponds to 197–202; it reads EKSRDT. A helical transmembrane segment spans residues 203-223; it reads FLAPVGIGLALFVALIPGVFV. The Extracellular segment spans residues 224-244; it reads TGGSANPVRSFGCAVGSRDFP. The NPA 2 motif lies at 229–231; that stretch reads NPV. The helical transmembrane segment at 245 to 265 threads the bilayer; that stretch reads GYHWIYWVGPLLGAALAAGYF. The Cytoplasmic segment spans residues 266–286; the sequence is RLVKMMHYEEANPGQDSPVDV.

This sequence belongs to the MIP/aquaporin (TC 1.A.8) family.

The protein localises to the membrane. It carries out the reaction H2O(in) = H2O(out). In terms of biological role, probable water channel that may have redundant functions with FgAQP5. This Gibberella zeae (strain ATCC MYA-4620 / CBS 123657 / FGSC 9075 / NRRL 31084 / PH-1) (Wheat head blight fungus) protein is Probable aquaporin-3.